A 112-amino-acid chain; its full sequence is MSNIYDSANELSRGLRGLPEYKAVKAAKDAIAADAEASKIFTDYLAFQEEIQKLAQTGQMPDASFQAKMEGFGKQIQGNSLLSEFFTKQQQLAIYLSDIEKIVFEPVSELLK.

This sequence belongs to the UPF0342 family.

This chain is UPF0342 protein SP_1372, found in Streptococcus pneumoniae serotype 4 (strain ATCC BAA-334 / TIGR4).